The chain runs to 139 residues: Putative pre-16S rRNA nuclease (139 aa).

The protein belongs to the YqgF nuclease family.

Its subcellular location is the cytoplasm. Functionally, could be a nuclease involved in processing of the 5'-end of pre-16S rRNA. The sequence is that of Putative pre-16S rRNA nuclease from Streptococcus thermophilus (strain ATCC BAA-491 / LMD-9).